The following is a 456-amino-acid chain: tRNA modification GTPase MnmE (456 aa).

The (6S)-5-formyl-5,6,7,8-tetrahydrofolate site is built by Arg25, Glu82, and Lys121. Residues 217-379 (GIKVVIIGKP…LLDEIVKIAG (163 aa)) form the TrmE-type G domain. Asn227 serves as a coordination point for K(+). Residues 227 to 232 (NAGKSS), 246 to 252 (TDIAGTT), and 271 to 274 (DTAG) contribute to the GTP site. Residue Ser231 coordinates Mg(2+). 3 residues coordinate K(+): Thr246, Ile248, and Thr251. Thr252 lines the Mg(2+) pocket. Residue Lys456 participates in (6S)-5-formyl-5,6,7,8-tetrahydrofolate binding.

It belongs to the TRAFAC class TrmE-Era-EngA-EngB-Septin-like GTPase superfamily. TrmE GTPase family. Homodimer. Heterotetramer of two MnmE and two MnmG subunits. Requires K(+) as cofactor.

The protein resides in the cytoplasm. Its function is as follows. Exhibits a very high intrinsic GTPase hydrolysis rate. Involved in the addition of a carboxymethylaminomethyl (cmnm) group at the wobble position (U34) of certain tRNAs, forming tRNA-cmnm(5)s(2)U34. This is tRNA modification GTPase MnmE from Endomicrobium trichonymphae.